The chain runs to 474 residues: Ribulose bisphosphate carboxylase large chain (474 aa).

Substrate-binding residues include Asn122 and Thr172. The active-site Proton acceptor is Lys174. Lys176 is a binding site for substrate. Positions 200, 202, and 203 each coordinate Mg(2+). Position 200 is an N6-carboxylysine (Lys200). His293 serves as the catalytic Proton acceptor. Substrate is bound by residues Arg294, His326, and Ser378.

It belongs to the RuBisCO large chain family. Type I subfamily. In terms of assembly, heterohexadecamer of 8 large chains and 8 small chains; disulfide-linked. The disulfide link is formed within the large subunit homodimers. The cofactor is Mg(2+). In terms of processing, the disulfide bond which can form in the large chain dimeric partners within the hexadecamer appears to be associated with oxidative stress and protein turnover.

The protein localises to the carboxysome. The catalysed reaction is 2 (2R)-3-phosphoglycerate + 2 H(+) = D-ribulose 1,5-bisphosphate + CO2 + H2O. It catalyses the reaction D-ribulose 1,5-bisphosphate + O2 = 2-phosphoglycolate + (2R)-3-phosphoglycerate + 2 H(+). In terms of biological role, ruBisCO catalyzes two reactions: the carboxylation of D-ribulose 1,5-bisphosphate, the primary event in carbon dioxide fixation, as well as the oxidative fragmentation of the pentose substrate in the photorespiration process. Both reactions occur simultaneously and in competition at the same active site. The sequence is that of Ribulose bisphosphate carboxylase large chain from Synechococcus sp. (strain JA-3-3Ab) (Cyanobacteria bacterium Yellowstone A-Prime).